The chain runs to 355 residues: Protein RecA (355 aa).

Position 67–74 (67–74 (GPESSGKT)) interacts with ATP.

It belongs to the RecA family.

It localises to the cytoplasm. Its function is as follows. Can catalyze the hydrolysis of ATP in the presence of single-stranded DNA, the ATP-dependent uptake of single-stranded DNA by duplex DNA, and the ATP-dependent hybridization of homologous single-stranded DNAs. It interacts with LexA causing its activation and leading to its autocatalytic cleavage. This Histophilus somni (strain 2336) (Haemophilus somnus) protein is Protein RecA.